The following is a 439-amino-acid chain: 3-phosphoshikimate 1-carboxyvinyltransferase (439 aa).

The 3-phosphoshikimate site is built by Lys-27, Ser-28, and Arg-32. Lys-27 is a binding site for phosphoenolpyruvate. Residues Gly-101 and Arg-130 each coordinate phosphoenolpyruvate. 3-phosphoshikimate is bound by residues Ser-175, Gln-177, Asp-326, and Lys-353. Gln-177 provides a ligand contact to phosphoenolpyruvate. The active-site Proton acceptor is the Asp-326. Positions 357 and 399 each coordinate phosphoenolpyruvate.

It belongs to the EPSP synthase family. In terms of assembly, monomer.

It localises to the cytoplasm. The catalysed reaction is 3-phosphoshikimate + phosphoenolpyruvate = 5-O-(1-carboxyvinyl)-3-phosphoshikimate + phosphate. It participates in metabolic intermediate biosynthesis; chorismate biosynthesis; chorismate from D-erythrose 4-phosphate and phosphoenolpyruvate: step 6/7. Functionally, catalyzes the transfer of the enolpyruvyl moiety of phosphoenolpyruvate (PEP) to the 5-hydroxyl of shikimate-3-phosphate (S3P) to produce enolpyruvyl shikimate-3-phosphate and inorganic phosphate. This Synechococcus sp. (strain CC9311) protein is 3-phosphoshikimate 1-carboxyvinyltransferase.